The sequence spans 1068 residues: Putative protein TIC 214 N-terminal part (1068 aa).

Helical transmembrane passes span 11–31, 68–88, 92–112, 131–151, 166–186, and 213–233; these read VLWV…LFGI, ITGQ…VLLI, LLTL…KDLI, IFFD…SPVL, FIFL…FVSL, and FSII…VPFI.

The protein belongs to the TIC214 family. In terms of assembly, part of the Tic complex.

The protein resides in the plastid. The protein localises to the chloroplast inner membrane. Functionally, involved in protein precursor import into chloroplasts. May be part of an intermediate translocation complex acting as a protein-conducting channel at the inner envelope. The sequence is that of Putative protein TIC 214 N-terminal part from Marchantia polymorpha (Common liverwort).